We begin with the raw amino-acid sequence, 707 residues long: Transcription termination factor Rho (707 aa).

Disordered regions lie at residues 1–38 (MSDT…RRGT) and 76–321 (QAAG…DEIQ). Low complexity-rich tracts occupy residues 16-31 (AAAP…TGAG) and 76-93 (QAAG…ADTA). The span at 107–132 (RTGDEAPAEKAEKAGKADKKADKAAA) shows a compositional bias: basic and acidic residues. A compositionally biased stretch (low complexity) spans 153–163 (ASAEQAAPADD). Positions 176 to 188 (DAGSPSATDTTVA) are enriched in polar residues. Over residues 203 to 213 (QQSQGHQQGQG) the composition is skewed to low complexity. Positions 215-265 (ARSDAEGGDGRRRDRRDRGDRDRGDRGDRGDRGDRGDRGERGRDRRNKGDD) are enriched in basic and acidic residues. The span at 301–315 (RRGRRGRYRDRRGRR) shows a compositional bias: basic residues. The 76-residue stretch at 331-406 (LIPVAGILDI…VRLDSVNGMA (76 aa)) folds into the Rho RNA-BD domain. ATP-binding positions include 449–454 (GKGQRG), 461–466 (KTGKTM), and R492.

It belongs to the Rho family. Homohexamer. The homohexamer assembles into an open ring structure.

Functionally, facilitates transcription termination by a mechanism that involves Rho binding to the nascent RNA, activation of Rho's RNA-dependent ATPase activity, and release of the mRNA from the DNA template. The sequence is that of Transcription termination factor Rho from Streptomyces lividans.